Here is a 340-residue protein sequence, read N- to C-terminus: Uroporphyrinogen decarboxylase (340 aa).

Residues 21-25 (RQAGR), Asp-71, Tyr-148, Ser-203, and His-316 contribute to the substrate site.

It belongs to the uroporphyrinogen decarboxylase family. As to quaternary structure, homodimer.

The protein localises to the cytoplasm. The enzyme catalyses uroporphyrinogen III + 4 H(+) = coproporphyrinogen III + 4 CO2. It functions in the pathway porphyrin-containing compound metabolism; protoporphyrin-IX biosynthesis; coproporphyrinogen-III from 5-aminolevulinate: step 4/4. In terms of biological role, catalyzes the decarboxylation of four acetate groups of uroporphyrinogen-III to yield coproporphyrinogen-III. This chain is Uroporphyrinogen decarboxylase, found in Campylobacter jejuni subsp. jejuni serotype O:6 (strain 81116 / NCTC 11828).